A 156-amino-acid polypeptide reads, in one-letter code: Probable cyclic pyranopterin monophosphate synthase (156 aa).

Residues 73–75 (LCH) and 109–110 (ME) each bind substrate. Residue D124 is part of the active site.

It belongs to the MoaC family. Homohexamer; trimer of dimers.

The catalysed reaction is (8S)-3',8-cyclo-7,8-dihydroguanosine 5'-triphosphate = cyclic pyranopterin phosphate + diphosphate. Its pathway is cofactor biosynthesis; molybdopterin biosynthesis. In terms of biological role, catalyzes the conversion of (8S)-3',8-cyclo-7,8-dihydroguanosine 5'-triphosphate to cyclic pyranopterin monophosphate (cPMP). The chain is Probable cyclic pyranopterin monophosphate synthase from Pyrococcus furiosus (strain ATCC 43587 / DSM 3638 / JCM 8422 / Vc1).